A 378-amino-acid chain; its full sequence is Mevalonate kinase (378 aa).

Residues Lys10, Ser138, and 143–149 (GSGLGSS) each bind ATP. 2 residues coordinate Mg(2+): Ser149 and Glu193. The active-site Proton acceptor is the Asp204.

Belongs to the GHMP kinase family. Mevalonate kinase subfamily. Mg(2+) is required as a cofactor.

The protein resides in the cytoplasm. The catalysed reaction is (R)-mevalonate + ATP = (R)-5-phosphomevalonate + ADP + H(+). The protein operates within isoprenoid biosynthesis; isopentenyl diphosphate biosynthesis via mevalonate pathway; isopentenyl diphosphate from (R)-mevalonate: step 1/3. Its activity is inhibited in vitro by geranyl pyrophosphate (GPP) and farnesyl pyrophosphate (FPP) that bind competitively at the ATP-binding site on the enzyme. In terms of biological role, catalyzes the phosphorylation of mevalonate to mevalonate 5-phosphate, a key step in isoprenoid and cholesterol biosynthesis. The chain is Mevalonate kinase from Arabidopsis thaliana (Mouse-ear cress).